Reading from the N-terminus, the 463-residue chain is Eukaryotic translation initiation factor 3 subunit E (463 aa).

Residues 224–407 (FNLGENQGCQ…NMLHITRPHA (184 aa)) enclose the PCI domain. A disordered region spans residues 432-463 (QSSVGEPRERGERGERGNKGGRGRPRTQEVAA). Basic and acidic residues predominate over residues 437–449 (EPRERGERGERGN).

The protein belongs to the eIF-3 subunit E family. Component of the eukaryotic translation initiation factor 3 (eIF-3) complex.

The protein localises to the cytoplasm. Its function is as follows. Component of the eukaryotic translation initiation factor 3 (eIF-3) complex, which is involved in protein synthesis of a specialized repertoire of mRNAs and, together with other initiation factors, stimulates binding of mRNA and methionyl-tRNAi to the 40S ribosome. The eIF-3 complex specifically targets and initiates translation of a subset of mRNAs involved in cell proliferation. This chain is Eukaryotic translation initiation factor 3 subunit E, found in Cryptococcus neoformans var. neoformans serotype D (strain JEC21 / ATCC MYA-565) (Filobasidiella neoformans).